The sequence spans 425 residues: UDP-N-acetylglucosamine 1-carboxyvinyltransferase (425 aa).

Phosphoenolpyruvate is bound at residue 22–23 (KN). UDP-N-acetyl-alpha-D-glucosamine is bound at residue Arg98. Cys122 acts as the Proton donor in catalysis. Cys122 carries the post-translational modification 2-(S-cysteinyl)pyruvic acid O-phosphothioketal. Residues 127 to 131 (RPVDQ), Asp313, and Ile335 contribute to the UDP-N-acetyl-alpha-D-glucosamine site.

This sequence belongs to the EPSP synthase family. MurA subfamily.

The protein resides in the cytoplasm. The enzyme catalyses phosphoenolpyruvate + UDP-N-acetyl-alpha-D-glucosamine = UDP-N-acetyl-3-O-(1-carboxyvinyl)-alpha-D-glucosamine + phosphate. The protein operates within cell wall biogenesis; peptidoglycan biosynthesis. Its function is as follows. Cell wall formation. Adds enolpyruvyl to UDP-N-acetylglucosamine. This chain is UDP-N-acetylglucosamine 1-carboxyvinyltransferase, found in Xylella fastidiosa (strain M23).